Here is a 372-residue protein sequence, read N- to C-terminus: Alpha-1,3-mannosyl-glycoprotein 4-beta-N-acetylglucosaminyltransferase-like protein MGAT4D (372 aa).

The Cytoplasmic segment spans residues 1–8 (MKTKNVNL). A helical; Signal-anchor for type II membrane protein membrane pass occupies residues 9-29 (LFALVAVLLFGFSCFCISRMN). The Lumenal segment spans residues 30-372 (QTNNQLINCR…REQHLKDHYY (343 aa)). Asparagine 54 and asparagine 143 each carry an N-linked (GlcNAc...) asparagine glycan.

This sequence belongs to the glycosyltransferase 54 family. May self-associate; specifically in the endoplasmic reticulum prior to its translocation to the Golgi. Interacts with MGAT1, MGAT3 and MAN2A2; may interact with MGTA1 specifically in the Golgi. Post-translationally, N-glycosylated. O-glycosylated; further modified with terminal sialic acid residues. As to expression, testis.

It is found in the golgi apparatus membrane. The protein localises to the endoplasmic reticulum membrane. May play a role in male spermatogenesis. In vitro acts as inhibitor of MGAT1 activity causing cell surface proteins to carry mainly high mannose N-glycans. The function is mediated by its lumenal domain and occurs specifically in the Golgi. A catalytic glucosyltransferase activity is not detected. May be involved in regulation of Sertoli-germ cell interactions during specific stages of spermatogenesis. The polypeptide is Alpha-1,3-mannosyl-glycoprotein 4-beta-N-acetylglucosaminyltransferase-like protein MGAT4D (Rattus norvegicus (Rat)).